A 349-amino-acid polypeptide reads, in one-letter code: GMP reductase (349 aa).

108–131 (IDFLKIKKIFLLSSELKYICIDVA) contributes to the NADP(+) binding site. Residues Gly-181 and Gly-183 each contribute to the K(+) site. The Thioimidate intermediate role is filled by Cys-186. 216-239 (IISDGGCTVSGDIAKAFGGGADFV) provides a ligand contact to NADP(+).

Belongs to the IMPDH/GMPR family. GuaC type 1 subfamily. In terms of assembly, homotetramer.

It catalyses the reaction IMP + NH4(+) + NADP(+) = GMP + NADPH + 2 H(+). Catalyzes the irreversible NADPH-dependent deamination of GMP to IMP. It functions in the conversion of nucleobase, nucleoside and nucleotide derivatives of G to A nucleotides, and in maintaining the intracellular balance of A and G nucleotides. The polypeptide is GMP reductase (Buchnera aphidicola subsp. Acyrthosiphon pisum (strain 5A)).